The following is a 315-amino-acid chain: Solute carrier family 25 member 32 (315 aa).

3 Solcar repeats span residues 20 to 109 (HVRY…IKSY), 118 to 209 (LEAT…LKLK), and 222 to 306 (LSTV…VSHF). A run of 6 helical transmembrane segments spans residues 26-43 (LIAGVSGGVLSNLALHPL), 89-106 (IWGAGLSWGLYFFFYNAI), 123-143 (YLVSAAEAGAMTLCITNPLWV), 186-203 (FVPGLFGTSHGALQFMAY), 227-243 (YISVAALSKIFAVAATY), and 281-300 (GIAPNLIRVTPACCITFVVY).

Belongs to the mitochondrial carrier (TC 2.A.29) family. Ubiquitous.

The protein resides in the mitochondrion inner membrane. It carries out the reaction FAD(in) = FAD(out). Its function is as follows. Facilitates flavin adenine dinucleotide (FAD) translocation across the mitochondrial inner membrane into the mitochondrial matrix where it acts as a redox cofactor to assist flavoenzyme activities in fundamental metabolic processes including fatty acid beta-oxidation, amino acid and choline metabolism as well as mitochondrial electron transportation. In particular, provides FAD to DLD dehydrogenase of the glycine cleavage system, part of mitochondrial one-carbon metabolic pathway involved in neural tube closure in early embryogenesis. The protein is Solute carrier family 25 member 32 of Homo sapiens (Human).